Consider the following 476-residue polypeptide: Bifunctional protein HldE (476 aa).

The segment at 1–318 (MKPILPDYNS…AEAVHGSQDT (318 aa)) is ribokinase. 195–198 (NMKE) provides a ligand contact to ATP. D264 is an active-site residue. Residues 344–476 (MTNGCFDILH…IINAIKGGKG (133 aa)) form a cytidylyltransferase region.

It in the N-terminal section; belongs to the carbohydrate kinase PfkB family. This sequence in the C-terminal section; belongs to the cytidylyltransferase family. As to quaternary structure, homodimer.

It catalyses the reaction D-glycero-beta-D-manno-heptose 7-phosphate + ATP = D-glycero-beta-D-manno-heptose 1,7-bisphosphate + ADP + H(+). The enzyme catalyses D-glycero-beta-D-manno-heptose 1-phosphate + ATP + H(+) = ADP-D-glycero-beta-D-manno-heptose + diphosphate. It participates in nucleotide-sugar biosynthesis; ADP-L-glycero-beta-D-manno-heptose biosynthesis; ADP-L-glycero-beta-D-manno-heptose from D-glycero-beta-D-manno-heptose 7-phosphate: step 1/4. It functions in the pathway nucleotide-sugar biosynthesis; ADP-L-glycero-beta-D-manno-heptose biosynthesis; ADP-L-glycero-beta-D-manno-heptose from D-glycero-beta-D-manno-heptose 7-phosphate: step 3/4. The protein operates within bacterial outer membrane biogenesis; LPS core biosynthesis. Catalyzes the phosphorylation of D-glycero-D-manno-heptose 7-phosphate at the C-1 position to selectively form D-glycero-beta-D-manno-heptose-1,7-bisphosphate. Its function is as follows. Catalyzes the ADP transfer from ATP to D-glycero-beta-D-manno-heptose 1-phosphate, yielding ADP-D-glycero-beta-D-manno-heptose. The sequence is that of Bifunctional protein HldE from Vibrio parahaemolyticus serotype O3:K6 (strain RIMD 2210633).